Reading from the N-terminus, the 183-residue chain is Archaemetzincin (183 aa).

His-132 contacts Zn(2+). The active-site Proton acceptor is the Glu-133. Zn(2+) is bound by residues His-136, His-142, Cys-143, Cys-148, Cys-167, and Cys-170.

It belongs to the peptidase M54 family. As to quaternary structure, monomer. It depends on Zn(2+) as a cofactor.

In terms of biological role, probable zinc metalloprotease whose natural substrate is unknown. In Aeropyrum pernix (strain ATCC 700893 / DSM 11879 / JCM 9820 / NBRC 100138 / K1), this protein is Archaemetzincin.